The chain runs to 272 residues: Energy-coupling factor transporter ATP-binding protein EcfA1 (272 aa).

The 236-residue stretch at 2-237 (IKVSDVCFSY…KNIIEKAKID (236 aa)) folds into the ABC transporter domain. Residue 37 to 44 (GHNGSGKS) participates in ATP binding.

It belongs to the ABC transporter superfamily. Energy-coupling factor EcfA family. In terms of assembly, forms a stable energy-coupling factor (ECF) transporter complex composed of 2 membrane-embedded substrate-binding proteins (S component), 2 ATP-binding proteins (A component) and 2 transmembrane proteins (T component).

Its subcellular location is the cell membrane. Its function is as follows. ATP-binding (A) component of a common energy-coupling factor (ECF) ABC-transporter complex. Unlike classic ABC transporters this ECF transporter provides the energy necessary to transport a number of different substrates. This Mesomycoplasma hyopneumoniae (strain J / ATCC 25934 / NCTC 10110) (Mycoplasma hyopneumoniae) protein is Energy-coupling factor transporter ATP-binding protein EcfA1.